The following is a 315-amino-acid chain: Protein phosphatase PTC7 homolog fig (315 aa).

The region spanning 54 to 309 (KHSIASAKDN…DDITVILATV (256 aa)) is the PPM-type phosphatase domain. 3 residues coordinate Mn(2+): aspartate 86, glycine 87, and aspartate 231.

This sequence belongs to the PP2C family. Mg(2+) serves as cofactor. The cofactor is Mn(2+).

It carries out the reaction O-phospho-L-seryl-[protein] + H2O = L-seryl-[protein] + phosphate. It catalyses the reaction O-phospho-L-threonyl-[protein] + H2O = L-threonyl-[protein] + phosphate. This chain is Protein phosphatase PTC7 homolog fig, found in Drosophila willistoni (Fruit fly).